Consider the following 182-residue polypeptide: Ribosome-recycling factor (182 aa).

The protein belongs to the RRF family.

The protein resides in the cytoplasm. Functionally, responsible for the release of ribosomes from messenger RNA at the termination of protein biosynthesis. May increase the efficiency of translation by recycling ribosomes from one round of translation to another. This is Ribosome-recycling factor from Gloeothece citriformis (strain PCC 7424) (Cyanothece sp. (strain PCC 7424)).